The chain runs to 198 residues: Protein GrpE (198 aa).

Belongs to the GrpE family. Homodimer.

The protein resides in the cytoplasm. Participates actively in the response to hyperosmotic and heat shock by preventing the aggregation of stress-denatured proteins, in association with DnaK and GrpE. It is the nucleotide exchange factor for DnaK and may function as a thermosensor. Unfolded proteins bind initially to DnaJ; upon interaction with the DnaJ-bound protein, DnaK hydrolyzes its bound ATP, resulting in the formation of a stable complex. GrpE releases ADP from DnaK; ATP binding to DnaK triggers the release of the substrate protein, thus completing the reaction cycle. Several rounds of ATP-dependent interactions between DnaJ, DnaK and GrpE are required for fully efficient folding. The sequence is that of Protein GrpE from Actinobacillus pleuropneumoniae serotype 3 (strain JL03).